Reading from the N-terminus, the 508-residue chain is Protein ultraspiracle (508 aa).

Residues 1–103 (MDNCDQDASF…NHPLSGSKHL (103 aa)) are modulating. Disordered regions lie at residues 21 to 40 (PDIS…KAES) and 55 to 92 (PGSN…QQYP). Polar residues predominate over residues 24–35 (SQLNDSNNSSFS). Phosphoserine is present on Ser35. Residues 57-90 (SNSASSNNNSAGDAQMAQAPNSAGGSAAAAVQQQ) are compositionally biased toward low complexity. NR C4-type zinc fingers lie at residues 104–124 (CSIC…CEGC) and 140–164 (CREN…YQKC). Residues 104 to 169 (CSICGDRASG…RYQKCLTCGM (66 aa)) constitute a DNA-binding region (nuclear receptor). The segment at 170–223 (KREAVQEERQRGARNAAGRLSASGGGSSGPGSVGGSSSQGGGGGGGVSGGMGSG) is hinge. A disordered region spans residues 178–228 (RQRGARNAAGRLSASGGGSSGPGSVGGSSSQGGGGGGGVSGGMGSGNGSDD). Over residues 192–224 (SGGGSSGPGSVGGSSSQGGGGGGGVSGGMGSGN) the composition is skewed to gly residues. The NR LBD domain maps to 239-498 (SIERIIEAEQ…ELFLEQLEAP (260 aa)).

Belongs to the nuclear hormone receptor family. NR2 subfamily. Heterodimer of USP and ECR. Only the heterodimer is capable of high-affinity binding to ecdysone.

The protein resides in the nucleus. Functionally, receptor for ecdysone. May be an important modulator of insect metamorphosis. Plays an important part in embryonic and post-embryonic development. Binds to ecdysone response elements (ECRES) such as in the promoter region of s15 chorion gene. The chain is Protein ultraspiracle (usp) from Drosophila melanogaster (Fruit fly).